The chain runs to 490 residues: One cut domain family member 3 (490 aa).

Disordered stretches follow at residues glycine 130–alanine 155, leucine 193–proline 213, and histidine 287–glutamate 316. Over residues alanine 143–glutamine 152 the composition is skewed to pro residues. Residues histidine 290–alanine 311 are compositionally biased toward gly residues. Positions proline 309 to alanine 395 form a DNA-binding region, CUT. Positions proline 411–tryptophan 470 form a DNA-binding region, homeobox.

Belongs to the CUT homeobox family. In terms of tissue distribution, specifically expressed in brain, stomach and gut. Within the gut, expressed only in duodenum and jejunum.

Its subcellular location is the nucleus. In terms of biological role, transcriptional activator. Binds the consensus DNA sequence 5'-DHWATTGAYTWWD-3' on a variety of gene promoters such as those of HNF3B and TTR. The protein is One cut domain family member 3 (Onecut3) of Mus musculus (Mouse).